The following is an 886-amino-acid chain: MKSQSQATPITGDEIRKAFLDFYESKSHLIIPSSSLIPDDPTVMLTIAGMLPFKPVFLGLRNRPSPRASSSQKCLRTNDIENVGVTARHHTFFEMLGNFSFGDYFKKEAIQWAWELITDIYHLKPENIIISVFHEDHESEKIWRDNIGIIPERIIRLDEKDNFWSSGATGPCGPCSELYYDFNPEKGLKNIDLEDGDRFIEFYNLVFMQYNRDSNGMLSDLKFKNIDTGMGLERMAQILQKKTNNYETDLILPIVKEAALIANIDYFSSDDRTKISLKILGDHTRAIIHLISDGVVASNLGRGYILRRLLRRMIRHGRLLAIKDDFLSRLASIGISLMQNTYPDLKNNKERILREINIEEKRFLETLDRGEKLLNDLIRSGEKLISGTKAFELYDTYGFPLELTKEILEEKNINVDLEGFTREMEAQKERAKAASQKIDLTLKGSIEREIDLFDQTIFEGYDSLNSQGIVKGIFFESNSVEKAIQGQTVQIILDQTSFYGESGGQVGDTGTISRNDAEIDIDKVIRKKNIFLHCGTVRKGEICRNQLVETRVDKFNRAKAESNHTATHLLQSALKLIIDKSVSQRGSLVGFNKLRFDFNSPQPLSKEQISQVESLVNSWISENHPIEVKNMDKDDALKAGALAMFGEKYGDIVRVVDVPGVSMELCGGTHVQTTSEVGSFKIISEIGISSGIRRIEALSGQLVLDYFKERDETVNKLSDLLKARPSQLFERIDSLQTELVNKNKEIQRMKDEIAYFKYSSLSSSAKKIGSFSLIINQIDGLDGSSLQSAALDLTSKLGDKSVVILGGIPDTEKKKLLFVVSFGDDLVRRGMHAGKLINEISRICSGGGGGKPNFAQAGAKDIDKLNDALEYARKDLWEKLLSYSDK.

Zn(2+) is bound by residues H564, H568, C666, and H670.

Belongs to the class-II aminoacyl-tRNA synthetase family. It depends on Zn(2+) as a cofactor.

Its subcellular location is the cytoplasm. The enzyme catalyses tRNA(Ala) + L-alanine + ATP = L-alanyl-tRNA(Ala) + AMP + diphosphate. In terms of biological role, catalyzes the attachment of alanine to tRNA(Ala) in a two-step reaction: alanine is first activated by ATP to form Ala-AMP and then transferred to the acceptor end of tRNA(Ala). Also edits incorrectly charged Ser-tRNA(Ala) and Gly-tRNA(Ala) via its editing domain. This is Alanine--tRNA ligase from Prochlorococcus marinus (strain MIT 9515).